The following is a 304-amino-acid chain: MSLMVISMACVAFFLLQGAWPHEGFRRKPSLLAHPGPLVKSEETVILQCWSDVMFEHFLLHREGTFNHTLRLIGEHIDGVSKGNFSIGRMTQDLAGTYRCYGSVTHSPYQLSAPSDPLDIVITGLYEKPSLSAQPGPTVLAGESVTLSCSSRSSYDMYHLSREGEAHERRLPAGPKVNRTFQADFPLDPATHGGTYRCFGSFRDSPYEWSKSSDPLLVSVTGNSSNSWPSPTEPSSETGNPRHLHVLIGTSVVKLPFTILLFFLLHRWCSNKKNASVMDQGPAGNRTVNREDSDEQDHQEVSYA.

An N-terminal signal peptide occupies residues 1-21; the sequence is MSLMVISMACVAFFLLQGAWP. The Extracellular portion of the chain corresponds to 22-245; the sequence is HEGFRRKPSL…SETGNPRHLH (224 aa). Ig-like C2-type domains are found at residues 42-107 and 142-205; these read EETV…VTHS and GESV…FRDS. Cystine bridges form between Cys49-Cys100 and Cys149-Cys198. Residues Asn67, Asn84, Asn178, and Asn223 are each glycosylated (N-linked (GlcNAc...) asparagine). The helical transmembrane segment at 246–264 threads the bilayer; sequence VLIGTSVVKLPFTILLFFL. The Cytoplasmic segment spans residues 265 to 304; the sequence is LHRWCSNKKNASVMDQGPAGNRTVNREDSDEQDHQEVSYA. The interval 275–304 is disordered; that stretch reads ASVMDQGPAGNRTVNREDSDEQDHQEVSYA. Positions 288 to 304 are enriched in basic and acidic residues; the sequence is VNREDSDEQDHQEVSYA.

Belongs to the immunoglobulin superfamily. Interacts with TYROBP. Post-translationally, N-glycosylated, glycosylation varies depending on the allele which alters cell surface expression levels. As to expression, expressed on a discrete subset of peripheral blood NK cells.

The protein resides in the cell membrane. In terms of biological role, activating natural killer (NK) receptor that recognizes C2 epitopes of HLA-C alleles. Bridging the innate and adaptive immune systems, NK cells express a number of cell surface receptors which either inhibit or stimulate their cytotoxicity. Able to activate NK cells citotoxicity and cytokine production such as IFNG. Receptor functions are attenuated even lost in some alleles, such as KIR2DS5*002 represented in this entry. The protein is Killer cell immunoglobulin-like receptor 2DS5 of Homo sapiens (Human).